We begin with the raw amino-acid sequence, 155 residues long: 3-hydroxyacyl-[acyl-carrier-protein] dehydratase FabZ (155 aa).

H58 is an active-site residue.

It belongs to the thioester dehydratase family. FabZ subfamily.

The protein localises to the cytoplasm. The catalysed reaction is a (3R)-hydroxyacyl-[ACP] = a (2E)-enoyl-[ACP] + H2O. Functionally, involved in unsaturated fatty acids biosynthesis. Catalyzes the dehydration of short chain beta-hydroxyacyl-ACPs and long chain saturated and unsaturated beta-hydroxyacyl-ACPs. In Rhizobium johnstonii (strain DSM 114642 / LMG 32736 / 3841) (Rhizobium leguminosarum bv. viciae), this protein is 3-hydroxyacyl-[acyl-carrier-protein] dehydratase FabZ.